Here is a 304-residue protein sequence, read N- to C-terminus: Putative S-adenosyl-L-methionine-dependent methyltransferase MAP_4189c (304 aa).

Residues Asp130 and 159–160 (DL) contribute to the S-adenosyl-L-methionine site.

The protein belongs to the UPF0677 family.

In terms of biological role, exhibits S-adenosyl-L-methionine-dependent methyltransferase activity. The polypeptide is Putative S-adenosyl-L-methionine-dependent methyltransferase MAP_4189c (Mycolicibacterium paratuberculosis (strain ATCC BAA-968 / K-10) (Mycobacterium paratuberculosis)).